Reading from the N-terminus, the 274-residue chain is THAP domain-containing protein 8 (274 aa).

Residues 1-85 form a THAP-type zinc finger; that stretch reads MPKYCRAPNC…LRPDAVPSIF (85 aa). The segment at 83–121 is disordered; the sequence is SIFSRGPPAKSQRRTRSTQKPVSPPPPLQKNTPLPQSPA.

The protein is THAP domain-containing protein 8 (THAP8) of Homo sapiens (Human).